A 244-amino-acid polypeptide reads, in one-letter code: 1-(5-phosphoribosyl)-5-[(5-phosphoribosylamino)methylideneamino] imidazole-4-carboxamide isomerase (244 aa).

Aspartate 8 acts as the Proton acceptor in catalysis. Aspartate 130 serves as the catalytic Proton donor.

Belongs to the HisA/HisF family.

The protein resides in the cytoplasm. It carries out the reaction 1-(5-phospho-beta-D-ribosyl)-5-[(5-phospho-beta-D-ribosylamino)methylideneamino]imidazole-4-carboxamide = 5-[(5-phospho-1-deoxy-D-ribulos-1-ylimino)methylamino]-1-(5-phospho-beta-D-ribosyl)imidazole-4-carboxamide. It functions in the pathway amino-acid biosynthesis; L-histidine biosynthesis; L-histidine from 5-phospho-alpha-D-ribose 1-diphosphate: step 4/9. The polypeptide is 1-(5-phosphoribosyl)-5-[(5-phosphoribosylamino)methylideneamino] imidazole-4-carboxamide isomerase (Hahella chejuensis (strain KCTC 2396)).